Consider the following 213-residue polypeptide: MKPYQRQFIEFALGKQVLKFGEFTLKSGRKSPYFFNAGLFNTGRDLALLGRFYAEALVDSGLEFDLLFGPAYKGIPIATTTAVALAEHHDLDLPYCFNRKEAKDHGEGGNLVGSALQGRVMLVDDVITAGTAIRESMEIIQANGATLAGVLISLDRQERGRGEISAIQEVERDYNCKVISIITLKDLIAYLEEKPEMAEHLAAVKAYREEFGV.

Lys-26 is a binding site for 5-phospho-alpha-D-ribose 1-diphosphate. An orotate-binding site is contributed by 34 to 35 (FF). Residues 72 to 73 (YK), Arg-99, Lys-100, Lys-103, His-105, and 124 to 132 (DDVITAGTA) contribute to the 5-phospho-alpha-D-ribose 1-diphosphate site. Positions 128 and 156 each coordinate orotate.

Belongs to the purine/pyrimidine phosphoribosyltransferase family. PyrE subfamily. In terms of assembly, homodimer. Requires Mg(2+) as cofactor.

It catalyses the reaction orotidine 5'-phosphate + diphosphate = orotate + 5-phospho-alpha-D-ribose 1-diphosphate. It functions in the pathway pyrimidine metabolism; UMP biosynthesis via de novo pathway; UMP from orotate: step 1/2. Catalyzes the transfer of a ribosyl phosphate group from 5-phosphoribose 1-diphosphate to orotate, leading to the formation of orotidine monophosphate (OMP). This chain is Orotate phosphoribosyltransferase, found in Escherichia coli O157:H7.